The following is a 362-amino-acid chain: Cobalt-precorrin-5B C(1)-methyltransferase (362 aa).

Belongs to the CbiD family.

It catalyses the reaction Co-precorrin-5B + S-adenosyl-L-methionine = Co-precorrin-6A + S-adenosyl-L-homocysteine. Its pathway is cofactor biosynthesis; adenosylcobalamin biosynthesis; cob(II)yrinate a,c-diamide from sirohydrochlorin (anaerobic route): step 6/10. Functionally, catalyzes the methylation of C-1 in cobalt-precorrin-5B to form cobalt-precorrin-6A. This Burkholderia thailandensis (strain ATCC 700388 / DSM 13276 / CCUG 48851 / CIP 106301 / E264) protein is Cobalt-precorrin-5B C(1)-methyltransferase.